The chain runs to 530 residues: Probable 1,4-beta-D-glucan cellobiohydrolase B (530 aa).

A signal peptide spans 1–26 (MLASTFSYRMYKTALILAALLGSGQA). The segment at 27 to 461 (QQVGTSQAEV…SNIKVGPIGS (435 aa)) is catalytic. E238 serves as the catalytic Nucleophile. Catalysis depends on E243, which acts as the Proton donor. N296 is a glycosylation site (N-linked (GlcNAc...) asparagine). A disordered region spans residues 462-492 (TFNSGGSNPGGGTTTTAKPTTTTTTAGSPGG). A ser/Thr-rich linker region spans residues 462–494 (TFNSGGSNPGGGTTTTAKPTTTTTTAGSPGGTG). Residues 475–488 (TTTAKPTTTTTTAG) are compositionally biased toward low complexity. Residues 494-530 (GVAQHYGQCGGNGWQGPTTCASPYTCQKLNDFYSQCL) form the CBM1 domain. 2 disulfides stabilise this stretch: C502–C519 and C513–C529.

Belongs to the glycosyl hydrolase 7 (cellulase C) family.

The protein localises to the secreted. The enzyme catalyses Hydrolysis of (1-&gt;4)-beta-D-glucosidic linkages in cellulose and cellotetraose, releasing cellobiose from the non-reducing ends of the chains.. In terms of biological role, the biological conversion of cellulose to glucose generally requires three types of hydrolytic enzymes: (1) Endoglucanases which cut internal beta-1,4-glucosidic bonds; (2) Exocellobiohydrolases that cut the disaccharide cellobiose from the non-reducing end of the cellulose polymer chain; (3) Beta-1,4-glucosidases which hydrolyze the cellobiose and other short cello-oligosaccharides to glucose. The protein is Probable 1,4-beta-D-glucan cellobiohydrolase B (cbhB) of Neosartorya fischeri (strain ATCC 1020 / DSM 3700 / CBS 544.65 / FGSC A1164 / JCM 1740 / NRRL 181 / WB 181) (Aspergillus fischerianus).